Consider the following 194-residue polypeptide: Phosphoheptose isomerase (194 aa).

Residues 37–194 form the SIS domain; sequence IADTFKAGGK…LIEKEMVAQG (158 aa). 52-54 is a substrate binding site; sequence NGG. Residues histidine 61 and glutamate 65 each coordinate Zn(2+). Residues glutamate 65, 93-94, 119-121, serine 124, and glutamine 172 contribute to the substrate site; these read ND and STS. Zn(2+)-binding residues include glutamine 172 and histidine 180.

This sequence belongs to the SIS family. GmhA subfamily. Homotetramer. The cofactor is Zn(2+).

It localises to the cytoplasm. The catalysed reaction is 2 D-sedoheptulose 7-phosphate = D-glycero-alpha-D-manno-heptose 7-phosphate + D-glycero-beta-D-manno-heptose 7-phosphate. The protein operates within carbohydrate biosynthesis; D-glycero-D-manno-heptose 7-phosphate biosynthesis; D-glycero-alpha-D-manno-heptose 7-phosphate and D-glycero-beta-D-manno-heptose 7-phosphate from sedoheptulose 7-phosphate: step 1/1. Its function is as follows. Catalyzes the isomerization of sedoheptulose 7-phosphate in D-glycero-D-manno-heptose 7-phosphate. The polypeptide is Phosphoheptose isomerase (Sodalis glossinidius (strain morsitans)).